A 183-amino-acid polypeptide reads, in one-letter code: Regulatory protein RecX (183 aa).

Polar residues predominate over residues 1 to 12 (MTSFPHPSTSES). A disordered region spans residues 1-26 (MTSFPHPSTSESGPDPDSEPNREEQA).

It belongs to the RecX family.

It is found in the cytoplasm. In terms of biological role, modulates RecA activity. This Mycobacterium sp. (strain KMS) protein is Regulatory protein RecX.